The chain runs to 878 residues: Aconitase htyD (878 aa).

Substrate is bound by residues Gln-173 and 290–292 (DSH). Residues Cys-472, Cys-535, and Cys-538 each coordinate [4Fe-4S] cluster. The substrate site is built by Arg-558 and Arg-563. The disordered stretch occupies residues 626–671 (IAIANQRTKPAPTMPAYVEPYRSFQPPVPPSSDQPQSMKDHGKTSN). 742–743 (SR) provides a ligand contact to substrate.

Belongs to the aconitase/IPM isomerase family.

The protein operates within antifungal biosynthesis. Functionally, aconitase; part of the gene cluster that mediates the de novo generation of L-homotyrosine from acetyl-CoA and 4-hydroxyphenyl-pyruvate. L-homotyrosine is a building block of echinocandin B, a fungal lipidated cyclic hexapeptide that acts as an antifungal agent. L-homotyrosine 4-hydroxyphenyl-pyruvate first undergoes an aldol-type condensation by htyA with the C-2 of acetyl-CoA followed by the release of CoA to form 2-(4-hydroxybenzyl)-malate. This is followed by isomerization of 2-(4-hydroxy-benzyl)-malate to 3-(4-hydroxybenzyl)-malate by htyD. Thereafter, 3-(4-hydroxybenzyl)-malate undergoes decarboxylation and oxidation to form 2-oxo-4-(4-hydroxybenzyl)butanoic acid, coupled to reduction of NAD(+) to NADH by htyC. The product then undergoes transamination catalyzed by htyB to form L-homotyrosine. This chain is Aconitase htyD, found in Aspergillus rugulosus (Emericella rugulosa).